The primary structure comprises 288 residues: Bifunctional protein MdtA (288 aa).

NADP(+) contacts are provided by residues Thr-129 to Val-132, Arg-152 to Lys-156, Thr-195 to Ala-198, and Lys-256.

Homotrimer.

It localises to the cytoplasm. It catalyses the reaction 5,10-methylenetetrahydromethanopterin + NADP(+) = 5,10-methenyl-5,6,7,8-tetrahydromethanopterin + NADPH. It carries out the reaction (6R)-5,10-methylene-5,6,7,8-tetrahydrofolate + NADP(+) = (6R)-5,10-methenyltetrahydrofolate + NADPH. It functions in the pathway one-carbon metabolism; formaldehyde degradation; formate from formaldehyde (H(4)MPT route): step 2/5. In terms of biological role, catalyzes the dehydrogenation of methylene-H(4)MPT. Can also catalyze the reversible dehydrogenation of methylene-H(4)F with 20-fold lower catalytic efficiency. The sequence is that of Bifunctional protein MdtA from Methylorubrum extorquens (strain ATCC 14718 / DSM 1338 / JCM 2805 / NCIMB 9133 / AM1) (Methylobacterium extorquens).